Here is a 134-residue protein sequence, read N- to C-terminus: Large ribosomal subunit protein uL16c (134 aa).

The interval 1–22 is disordered; sequence MLSPKRTRFRKQHRGRMKGISH.

It belongs to the universal ribosomal protein uL16 family. In terms of assembly, part of the 50S ribosomal subunit.

Its subcellular location is the plastid. The protein localises to the chloroplast. The sequence is that of Large ribosomal subunit protein uL16c from Nicotiana tabacum (Common tobacco).